Consider the following 425-residue polypeptide: Serine hydroxymethyltransferase (425 aa).

(6S)-5,6,7,8-tetrahydrofolate-binding positions include Leu-128 and 132-134 (GHL). The residue at position 237 (Lys-237) is an N6-(pyridoxal phosphate)lysine.

This sequence belongs to the SHMT family. In terms of assembly, homodimer. Pyridoxal 5'-phosphate serves as cofactor.

Its subcellular location is the cytoplasm. It carries out the reaction (6R)-5,10-methylene-5,6,7,8-tetrahydrofolate + glycine + H2O = (6S)-5,6,7,8-tetrahydrofolate + L-serine. It participates in one-carbon metabolism; tetrahydrofolate interconversion. The protein operates within amino-acid biosynthesis; glycine biosynthesis; glycine from L-serine: step 1/1. In terms of biological role, catalyzes the reversible interconversion of serine and glycine with tetrahydrofolate (THF) serving as the one-carbon carrier. This reaction serves as the major source of one-carbon groups required for the biosynthesis of purines, thymidylate, methionine, and other important biomolecules. Also exhibits THF-independent aldolase activity toward beta-hydroxyamino acids, producing glycine and aldehydes, via a retro-aldol mechanism. In Wolbachia pipientis wMel, this protein is Serine hydroxymethyltransferase.